A 610-amino-acid chain; its full sequence is Elongation factor 4 (610 aa).

One can recognise a tr-type G domain in the interval 11–193 (EKIRNFSIIA…QIVEKVPAPT (183 aa)). GTP-binding positions include 23 to 28 (DHGKST) and 140 to 143 (NKID).

The protein belongs to the TRAFAC class translation factor GTPase superfamily. Classic translation factor GTPase family. LepA subfamily.

The protein localises to the cell membrane. It catalyses the reaction GTP + H2O = GDP + phosphate + H(+). Functionally, required for accurate and efficient protein synthesis under certain stress conditions. May act as a fidelity factor of the translation reaction, by catalyzing a one-codon backward translocation of tRNAs on improperly translocated ribosomes. Back-translocation proceeds from a post-translocation (POST) complex to a pre-translocation (PRE) complex, thus giving elongation factor G a second chance to translocate the tRNAs correctly. Binds to ribosomes in a GTP-dependent manner. The protein is Elongation factor 4 of Streptococcus agalactiae serotype Ia (strain ATCC 27591 / A909 / CDC SS700).